A 272-amino-acid polypeptide reads, in one-letter code: 3-hydroxyanthranilate 3,4-dioxygenase (272 aa).

A domain A (catalytic) region spans residues 1 to 154 (MMEWIDENSS…SEEHKTGKPS (154 aa)). Arginine 38 serves as a coordination point for O2. Positions 42, 48, and 86 each coordinate Fe cation. Glutamate 48 is a substrate binding site. Positions 90 and 100 each coordinate substrate. The tract at residues 155-169 (KESSCSINVDTETEL) is linker. The interval 170-272 (MEPFPLKQWL…SITVDSLANK (103 aa)) is domain B.

Belongs to the 3-HAO family. The cofactor is Fe(2+).

It is found in the cytoplasm. It carries out the reaction 3-hydroxyanthranilate + O2 = (2Z,4Z)-2-amino-3-carboxymuconate 6-semialdehyde. It functions in the pathway cofactor biosynthesis; NAD(+) biosynthesis; quinolinate from L-kynurenine: step 3/3. Functionally, catalyzes the oxidative ring opening of 3-hydroxyanthranilate to 2-amino-3-carboxymuconate semialdehyde, which spontaneously cyclizes to quinolinate. The chain is 3-hydroxyanthranilate 3,4-dioxygenase from Nematostella vectensis (Starlet sea anemone).